Here is a 146-residue protein sequence, read N- to C-terminus: Hemoglobin subunit beta (146 aa).

An N-acetylvaline modification is found at Val-1. The region spanning 2-146 (HLTPEEKNAV…VANALAHKYH (145 aa)) is the Globin domain. Thr-12 is subject to Phosphothreonine. A Phosphoserine modification is found at Ser-44. N6-acetyllysine is present on Lys-59. Residue His-63 participates in heme b binding. Lys-82 carries the N6-acetyllysine modification. His-92 is a binding site for heme b. The residue at position 93 (Cys-93) is an S-nitrosocysteine. An N6-acetyllysine modification is found at Lys-144.

This sequence belongs to the globin family. Heterotetramer of two alpha chains and two beta chains. As to expression, red blood cells.

In terms of biological role, involved in oxygen transport from the lung to the various peripheral tissues. The polypeptide is Hemoglobin subunit beta (HBB) (Theropithecus gelada (Gelada baboon)).